A 232-amino-acid chain; its full sequence is Putative membrane protein ORF8 (232 aa).

A compositionally biased stretch (low complexity) spans Gly71–Asp84. Positions Gly71–His121 are disordered. A run of 2 helical transmembrane segments spans residues Val166 to Ala182 and Leu195 to Val211.

It is found in the membrane. The protein is Putative membrane protein ORF8 (ORF8) of Ictalurid herpesvirus 1 (strain Auburn) (IcHV-1).